A 515-amino-acid chain; its full sequence is Arabinose import ATP-binding protein AraG 2 (515 aa).

Residues 1 to 22 form a disordered region; sequence MTMQTMTAASGHDAEAGTPPDG. ABC transporter domains follow at residues 25–260 and 260–511; these read LALD…MVGR and RSIE…LIKL. Position 57-64 (57-64) interacts with ATP; that stretch reads GENGAGKS.

The protein belongs to the ABC transporter superfamily. Arabinose importer (TC 3.A.1.2.2) family. The complex is composed of two ATP-binding proteins (AraG), two transmembrane proteins (AraH) and a solute-binding protein (AraF).

The protein localises to the cell inner membrane. The enzyme catalyses L-arabinose(out) + ATP + H2O = L-arabinose(in) + ADP + phosphate + H(+). Part of the ABC transporter complex AraFGH involved in arabinose import. Responsible for energy coupling to the transport system. The chain is Arabinose import ATP-binding protein AraG 2 from Burkholderia cenocepacia (strain HI2424).